The chain runs to 340 residues: MASTRRPVGARTLLACASLLAAMGLGVPESAEPVGTHARPQPPGAELPAPPANSPPEPTIAHAHSVDPRDAWMLFVKQSDKGINSKRRSKARRLKLGLPGPPGPPGPQGPPGPFIPSEVLLKEFQLLLKGAVRQRESHLEHCTRDLTTPASGSPSRVPAAQELDSQDPGALLALLAATLAQGPRAPRVEAAFHCRLRRDVQVDRRALHELGIYYLPEVEGAFHRGPGLNLTSGQYTAPVAGFYALAATLHVALTEQPRKGPTRPRDRLRLLICIQSLCQHNASLETVMGLENSSELFTISVNGVLYLQAGHYTSVFLDNASGSSLTVRSGSHFSAILLGL.

The first 24 residues, M1–G24, serve as a signal peptide directing secretion. Disordered regions lie at residues S30–A63, S79–G112, and H141–Q161. Positions P40–P58 are enriched in pro residues. Over residues N84–K95 the composition is skewed to basic residues. Residues P99, P101, P102, P104, P105, and P107 each carry the hydroxyproline modification. Over residues P99 to G112 the composition is skewed to pro residues. A compositionally biased stretch (polar residues) spans D145 to P154. In terms of domain architecture, C1q spans A185–L340. N-linked (GlcNAc...) asparagine glycosylation is found at N229, N281, N292, and N319.

Belongs to the adipolin/erythroferrone family. Homodimer; disulfide-linked. Forms trimer, hexamers and higher molecular weight oligomers. May form heteromeric complexes with C1QTNF2 and C1QTNF12 and, to a lesser extent, with C1QTNF5 and C1QTNF10. Interacts with BMP5 and BMP7; the interaction inhibits BMP-induced transcription of HAMP. Interacts with BMP6; the interaction inhibits BMP-induced transcription of HAMP. Interacts with BMP2. Interacts with heterodimers composed of BMP2 and BMP6 in vitro, the interaction inhibits the heterodimer binding to its receptor BMPR1A /ALK3 and thereby suppresses expression of HAMP. Post-translationally, N-glycosylated; required for secretion of the mature protein. In terms of tissue distribution, expressed in the soleus muscle in the leg (at protein level). Found in blood (at protein level). Weakly expressed in the heart (at protein level). Predominantly expressed in skeletal muscle and, at much lower levels, in other tissues, including lung, eye, smooth muscle, brain and kidney. Within skeletal muscles, higher expression levels in soleus as compared with plantaris. Expressed in osteoblasts, mature osteoclasts and erythroblasts. When fasting, females tend to have higher circulating levels than males. Obese mice tend to have lower expression and circulating levels as compared to lean animals. Following EPO treatment, only expressed in bone marrow and spleen.

Its subcellular location is the secreted. Its function is as follows. Iron-regulatory hormone that acts as an erythroid regulator after hemorrhage: produced by erythroblasts following blood loss and mediates suppression of hepcidin (HAMP) expression in the liver, thereby promoting increased iron absorption and mobilization from stores. Promotes lipid uptake into adipocytes and hepatocytes via transcriptional up-regulation of genes involved in fatty acid uptake. Inhibits apoptosis and inflammatory response in cardiomyocytes via promotion of sphingosine-1-phosphate (S1P) and cAMP-dependent activation of AKT signaling. Inhibits autophagy induced by nutrient deficiency in hepatocytes via promoting the phosphorylation of IRS1, AKT, and MTOR, and thereby subsequent activation of the AKT-MTOR signaling pathway. Negatively regulates the differentiation of osteoblasts, potentially via sequestering BMP2, and thereby inhibits the activation of SMAD signaling. The reduction in BMP2 signaling in osteoblasts also results in an increase in expression of the osteoclastogenesis-promoting factors TNFSF11/RANKL and SOST, thereby indirectly promotes bone resorption. The sequence is that of Erythroferrone from Mus musculus (Mouse).